We begin with the raw amino-acid sequence, 670 residues long: Leiomodin-3 (670 aa).

4 disordered regions span residues 34–72, 94–120, 139–165, and 202–274; these read EMDDIAPDERVPVGLRQKDASHEMTVRDCTEPESEEEID, EIAPDERVPVGMRQRDQTDKPPTGSFD, EEERVPTTLLPSQKTNEEHEAKNEDKV, and EDKV…NWVP. Composition is skewed to basic and acidic residues over residues 40–63, 97–112, 153–163, 205–214, and 249–261; these read PDERVPVGLRQKDASHEMTVRDCT, PDERVPVGMRQRDQTD, TNEEHEAKNED, VCDKPVKTDL, and TETKVNEEKKEDS. A coiled-coil region spans residues 150–183; that stretch reads SQKTNEEHEAKNEDKVEELELVYEEIVEEVEGGQ. A coiled-coil region spans residues 464–494; sequence DRQRQQRMEEQKLQQMKEQRKVMEMYEDSLN. A disordered region spans residues 517–556; that stretch reads NGAEDIPEDSPEPSPQPSPPHQLCKTQHLAPQQHPPNLST. Residues 637–656 form the WH2 domain; sequence PRDHLLSEIRQSNVAYLKAV.

It belongs to the tropomodulin family. In terms of tissue distribution, expressed in muscle (at protein level).

It localises to the cytoplasm. Its subcellular location is the myofibril. The protein localises to the sarcomere. The protein resides in the a band. It is found in the m line. It localises to the cytoskeleton. Functionally, essential for the organization of sarcomeric thin filaments in skeletal muscle. This Danio rerio (Zebrafish) protein is Leiomodin-3.